We begin with the raw amino-acid sequence, 213 residues long: NPVDDHQNDDHHDAPIVGHHDAFLKAEFDLTSLNADLEKFIHHEIEKEIHDVENHTEHNKHEIDALHLEIKQLHEEVEYFKSHHVAFSAELTHPIENLGAEEIAHFDKVRVNSGDAYHVDTGKFVAPEEGFFYFSVTICTKRDSILEMALHVNDHDEMIIHADAEHLELGCASNSEIVHLQKGDHVEVVKHGADGVPPFYIHTMSTFTGFMLH.

The C1q domain occupies 80-213 (FKSHHVAFSA…MSTFTGFMLH (134 aa)).

As to expression, pallium, gill and liver.

It localises to the secreted. Its function is as follows. Binds heavy metals. May function as a carrier of divalent cations in plasma. This is Heavy metal-binding protein HIP from Mytilus edulis (Blue mussel).